We begin with the raw amino-acid sequence, 249 residues long: MSEALLVKVGGSLRGAEALLEELAAYPGPLVLVHGGGPEIGEWLKRLGYESRFVGGLRVTPPEQLEVVEMALYLTGKRLAWGLSRRGRKALALSGRDALCLRGRALPELGRVGEVVGVEVGLLLDLLEKGYTPLLAPIALDEEGPLNVNADTAAGAVAGALGWPAVFLTDVEGVYRNPKDPKTRFPRLTPKEVEALKEEGVIQGGMIPKVEAALAALRAGAPWAAVAKGERGVLRRLLSGEGGTLFSPS.

Substrate is bound by residues 36 to 37 (GG), Arg58, and Asn147.

This sequence belongs to the acetylglutamate kinase family. ArgB subfamily.

It is found in the cytoplasm. The catalysed reaction is N-acetyl-L-glutamate + ATP = N-acetyl-L-glutamyl 5-phosphate + ADP. The protein operates within amino-acid biosynthesis; L-arginine biosynthesis; N(2)-acetyl-L-ornithine from L-glutamate: step 2/4. Catalyzes the ATP-dependent phosphorylation of N-acetyl-L-glutamate. In Thermus thermophilus (strain ATCC 27634 / DSM 579 / HB8), this protein is Acetylglutamate kinase.